The primary structure comprises 407 residues: Serine hydroxymethyltransferase (407 aa).

Residues Y51 and 94 to 95 contribute to the pyridoxal 5'-phosphate site; that span reads GS. (6S)-5,6,7,8-tetrahydrofolate is bound by residues L117 and 121–123; that span reads GHL. Residues S172, H200, and H225 each contribute to the pyridoxal 5'-phosphate site. K226 is subject to N6-(pyridoxal phosphate)lysine. A (6S)-5,6,7,8-tetrahydrofolate-binding site is contributed by E242. G258 provides a ligand contact to pyridoxal 5'-phosphate.

Belongs to the SHMT family. As to quaternary structure, homodimer. Pyridoxal 5'-phosphate serves as cofactor.

The protein localises to the cytoplasm. It catalyses the reaction (6R)-5,10-methylene-5,6,7,8-tetrahydrofolate + glycine + H2O = (6S)-5,6,7,8-tetrahydrofolate + L-serine. The protein operates within one-carbon metabolism; tetrahydrofolate interconversion. Its pathway is amino-acid biosynthesis; glycine biosynthesis; glycine from L-serine: step 1/1. Catalyzes the reversible interconversion of serine and glycine with tetrahydrofolate (THF) serving as the one-carbon carrier. This reaction serves as the major source of one-carbon groups required for the biosynthesis of purines, thymidylate, methionine, and other important biomolecules. Also exhibits THF-independent aldolase activity toward beta-hydroxyamino acids, producing glycine and aldehydes, via a retro-aldol mechanism. This Thermus thermophilus (strain ATCC 27634 / DSM 579 / HB8) protein is Serine hydroxymethyltransferase.